Reading from the N-terminus, the 144-residue chain is FK506-binding protein 2 (144 aa).

The first 20 residues, 1–20, serve as a signal peptide directing secretion; that stretch reads MARIIVLIVAFMALIAGVFA. A PPIase FKBP-type domain is found at 48–136; that stretch reads GDTVSVHYTG…IFTTELVSID (89 aa). Positions 141-144 match the Prevents secretion from ER motif; that stretch reads RDEL.

This sequence belongs to the FKBP-type PPIase family. FKBP2 subfamily.

Its subcellular location is the endoplasmic reticulum. It carries out the reaction [protein]-peptidylproline (omega=180) = [protein]-peptidylproline (omega=0). With respect to regulation, inhibited by both FK506 and rapamycin. In terms of biological role, PPIases accelerate the folding of proteins. It catalyzes the cis-trans isomerization of proline imidic peptide bonds in oligopeptides. This chain is FK506-binding protein 2 (FPR2), found in Yarrowia lipolytica (strain CLIB 122 / E 150) (Yeast).